Here is a 152-residue protein sequence, read N- to C-terminus: Ribosome maturation factor RimP (152 aa).

This sequence belongs to the RimP family.

The protein resides in the cytoplasm. Required for maturation of 30S ribosomal subunits. This Fervidobacterium nodosum (strain ATCC 35602 / DSM 5306 / Rt17-B1) protein is Ribosome maturation factor RimP.